The sequence spans 256 residues: Major prion protein (256 aa).

An N-terminal signal peptide occupies residues Met1–Cys24. The segment at Lys25–Tyr41 is interaction with ADGRG6. Residues Lys25 to Ala233 form an interaction with GRB2, ERI3 and SYN1 region. The disordered stretch occupies residues Pro28–Thr110. 5 repeat units span residues Pro54–Gln62, Pro63–Gln70, Pro71–Gln78, Pro79–Gln86, and Pro87–Gln95. The interval Pro54–Gln95 is 5 X 8 AA tandem repeats of P-H-G-G-G-W-G-Q. Residues Gln55–Gly97 are compositionally biased toward gly residues. 12 residues coordinate Cu(2+): His64, Gly65, Gly66, His72, Gly73, Gly74, His80, Gly81, Gly82, His88, Gly90, and Gly91. A disulfide bridge connects residues Cys182 and Cys217. 2 N-linked (GlcNAc...) asparagine glycosylation sites follow: Asn184 and Asn200. Residue Ala233 is the site of GPI-anchor amidated alanine attachment. The propeptide at Ser234–Gly256 is removed in mature form.

This sequence belongs to the prion family. As to quaternary structure, monomer and homodimer. Has a tendency to aggregate into amyloid fibrils containing a cross-beta spine, formed by a steric zipper of superposed beta-strands. Soluble oligomers may represent an intermediate stage on the path to fibril formation. Copper binding may promote oligomerization. Interacts with GRB2, APP, ERI3/PRNPIP and SYN1. Mislocalized cytosolically exposed PrP interacts with MGRN1; this interaction alters MGRN1 subcellular location and causes lysosomal enlargement. Interacts with APP. Interacts with KIAA1191. Interacts with ADGRG6.

The protein localises to the cell membrane. The protein resides in the golgi apparatus. In terms of biological role, its primary physiological function is unclear. May play a role in neuronal development and synaptic plasticity. May be required for neuronal myelin sheath maintenance. May promote myelin homeostasis through acting as an agonist for ADGRG6 receptor. May play a role in iron uptake and iron homeostasis. Soluble oligomers are toxic to cultured neuroblastoma cells and induce apoptosis (in vitro). Association with GPC1 (via its heparan sulfate chains) targets PRNP to lipid rafts. Also provides Cu(2+) or Zn(2+) for the ascorbate-mediated GPC1 deaminase degradation of its heparan sulfate side chains. This is Major prion protein (PRNP) from Felis catus (Cat).